Consider the following 344-residue polypeptide: Angiopoietin-related protein 7 (344 aa).

The first 26 residues, 1 to 26 (MLKKTLSAVAWLCIFLVAFVSHPVWP), serve as a signal peptide directing secretion. Positions 37–116 (ELTAATCCEE…IGIMQLQAAQ (80 aa)) form a coiled coil. N-linked (GlcNAc...) asparagine glycosylation occurs at Asn-56. Residues 120–341 (QTSADAIYDC…RVEMKIRPED (222 aa)) form the Fibrinogen C-terminal domain. A disulfide bridge links Cys-129 with Cys-160. N-linked (GlcNAc...) asparagine glycans are attached at residues Asn-251 and Asn-265. Cys-283 and Cys-296 are oxidised to a cystine.

In terms of assembly, homotetramer; disulfide-linked.

It is found in the secreted. Its function is as follows. Has a role in the formation and organization of the extracellular matrix. In the eye, it functions as a mediator of dexamethasone-induced matrix deposition in the trabecular meshwork, the tissue responsible for the outflow of the ocular aqueous humor and for the maintenance of intraocular pressure. Is a negative regulator of angiogenesis in the cornea, and plays a major role in maintaining corneal avascularity and transparency. The protein is Angiopoietin-related protein 7 (ANGPTL7) of Bos taurus (Bovine).